The sequence spans 406 residues: Na(+)/H(+) antiporter NhaA (406 aa).

A run of 12 helical transmembrane segments spans residues 29-49 (FAGILLIIAFTLAIIVSNNIF), 75-95 (FIELVNDGLMTFFFLLIGLEM), 111-131 (ILPAVAALGGVVVPVLIYMFF), 141-161 (GWAIPIATDTAFVLGILSFFS), 170-190 (AFIIGFSLIDDAFALIILALF), 195-215 (INTPALLISSVIIFILFILNY), 220-240 (QLFYYIIVGLLLWISMVESGI), 242-262 (GTLCGAIIALFIPVNIKGEFN), 278-298 (YFILPLFVFMNSGILLEYFAF), 306-326 (ILALIYGIIFGLFVGKQLGIM), 349-369 (FYSIAILGGIGFTLSLFIGSI), and 382-402 (AAVIIGSLISALFGVAVLKYC).

It belongs to the NhaA Na(+)/H(+) (TC 2.A.33) antiporter family.

The protein localises to the cell inner membrane. The enzyme catalyses Na(+)(in) + 2 H(+)(out) = Na(+)(out) + 2 H(+)(in). Its function is as follows. Na(+)/H(+) antiporter that extrudes sodium in exchange for external protons. The sequence is that of Na(+)/H(+) antiporter NhaA from Rickettsia massiliae (strain Mtu5).